Reading from the N-terminus, the 340-residue chain is CaiB/baiF CoA-transferase family protein ZK892.4 (340 aa).

D154 acts as the Nucleophile in catalysis.

Belongs to the CoA-transferase III family.

The chain is CaiB/baiF CoA-transferase family protein ZK892.4 from Caenorhabditis elegans.